A 122-amino-acid polypeptide reads, in one-letter code: Large ribosomal subunit protein uL14 (122 aa).

This sequence belongs to the universal ribosomal protein uL14 family. Part of the 50S ribosomal subunit. Forms a cluster with proteins L3 and L19. In the 70S ribosome, L14 and L19 interact and together make contacts with the 16S rRNA in bridges B5 and B8.

Its function is as follows. Binds to 23S rRNA. Forms part of two intersubunit bridges in the 70S ribosome. In Clostridioides difficile (strain 630) (Peptoclostridium difficile), this protein is Large ribosomal subunit protein uL14.